A 388-amino-acid polypeptide reads, in one-letter code: Succinate--CoA ligase [ADP-forming] subunit beta (388 aa).

Residues 9 to 244 (KALFAEYGLP…PSQDDAREAH (236 aa)) form the ATP-grasp domain. ATP contacts are provided by residues K46, 53-55 (GRG), E99, T102, and E107. 2 residues coordinate Mg(2+): N199 and D213. Substrate-binding positions include N264 and 321–323 (GIV).

The protein belongs to the succinate/malate CoA ligase beta subunit family. As to quaternary structure, heterotetramer of two alpha and two beta subunits. Mg(2+) serves as cofactor.

It carries out the reaction succinate + ATP + CoA = succinyl-CoA + ADP + phosphate. It catalyses the reaction GTP + succinate + CoA = succinyl-CoA + GDP + phosphate. The protein operates within carbohydrate metabolism; tricarboxylic acid cycle; succinate from succinyl-CoA (ligase route): step 1/1. Functionally, succinyl-CoA synthetase functions in the citric acid cycle (TCA), coupling the hydrolysis of succinyl-CoA to the synthesis of either ATP or GTP and thus represents the only step of substrate-level phosphorylation in the TCA. The beta subunit provides nucleotide specificity of the enzyme and binds the substrate succinate, while the binding sites for coenzyme A and phosphate are found in the alpha subunit. The chain is Succinate--CoA ligase [ADP-forming] subunit beta from Shewanella pealeana (strain ATCC 700345 / ANG-SQ1).